The chain runs to 494 residues: Ankyrin repeat domain-containing protein 33B (494 aa).

Residues 1-80 (MVLLAGTGPE…SAESVPEGVP (80 aa)) form a disordered region. The segment covering 30–42 (VEEDPADYEEFED) has biased composition (acidic residues). 5 ANK repeats span residues 84-113 (PETATLLRAACANNVGLLRTLVRRGVSVEE), 120-150 (NGRTGLIVACYHGFVDTVVALAECPHVDVNW), 154-183 (EGNTALITAAQAGHAIITNYLLNYFPGLDL), 189-218 (FGFTALMKAAMQGRTDCIRALMLAGADVHA), and 223-255 (RGMSPQEWATYTGRVDAVRLMQRLLERPCPEQF). The interval 349–494 (RAARGPQAQE…RRTAPWKKRT (146 aa)) is disordered. A compositionally biased stretch (basic and acidic residues) spans 371-382 (TGQEDADSREGS). Ser-405 carries the phosphoserine modification. Basic and acidic residues-rich tracts occupy residues 440–451 (RPARKGSTKDSG) and 459–487 (RYKEAKEEKRKAEEAEKKRQAEAQKERRT). The stretch at 459–488 (RYKEAKEEKRKAEEAEKKRQAEAQKERRTA) forms a coiled coil.

The chain is Ankyrin repeat domain-containing protein 33B (ANKRD33B) from Homo sapiens (Human).